A 393-amino-acid polypeptide reads, in one-letter code: Phosphoglycerate kinase (393 aa).

Substrate is bound by residues 21 to 23 (DLN), arginine 36, 59 to 62 (HLGR), arginine 113, and arginine 146. Residues lysine 197, glutamate 319, and 345–348 (GGDT) each bind ATP.

Belongs to the phosphoglycerate kinase family. In terms of assembly, monomer.

The protein localises to the cytoplasm. It catalyses the reaction (2R)-3-phosphoglycerate + ATP = (2R)-3-phospho-glyceroyl phosphate + ADP. The protein operates within carbohydrate degradation; glycolysis; pyruvate from D-glyceraldehyde 3-phosphate: step 2/5. This chain is Phosphoglycerate kinase, found in Nitratidesulfovibrio vulgaris (strain DP4) (Desulfovibrio vulgaris).